A 170-amino-acid chain; its full sequence is Phosphopantetheine adenylyltransferase (170 aa).

Thr-9 is a binding site for substrate. ATP is bound by residues 9–10 and His-17; that span reads TF. Substrate is bound by residues Lys-41, Leu-73, and Arg-87. ATP contacts are provided by residues 88-90, Glu-98, and 123-129; these read GLR and YQFISGT.

It belongs to the bacterial CoaD family. In terms of assembly, homohexamer. The cofactor is Mg(2+).

It is found in the cytoplasm. The catalysed reaction is (R)-4'-phosphopantetheine + ATP + H(+) = 3'-dephospho-CoA + diphosphate. It participates in cofactor biosynthesis; coenzyme A biosynthesis; CoA from (R)-pantothenate: step 4/5. In terms of biological role, reversibly transfers an adenylyl group from ATP to 4'-phosphopantetheine, yielding dephospho-CoA (dPCoA) and pyrophosphate. This is Phosphopantetheine adenylyltransferase from Bordetella petrii (strain ATCC BAA-461 / DSM 12804 / CCUG 43448).